A 396-amino-acid polypeptide reads, in one-letter code: uncharacterized protein (396 aa).

It belongs to the mycobacterial PPE family.

This is an uncharacterized protein from Mycobacterium tuberculosis (strain CDC 1551 / Oshkosh).